The sequence spans 74 residues: MLKCFIILTLYKHYTFVIQILTLLGTIKNHENFNLHVTGQCLKKSTLNLLKFLFVELEYIYLAHICFLKASVGF.

This is an uncharacterized protein from Staphylococcus aureus.